A 286-amino-acid chain; its full sequence is Pantothenate synthetase (286 aa).

30 to 37 contributes to the ATP binding site; the sequence is MGNLHDGH. His-37 (proton donor) is an active-site residue. A (R)-pantoate-binding site is contributed by Gln-61. A beta-alanine-binding site is contributed by Gln-61. An ATP-binding site is contributed by 148-151; that stretch reads GKKD. Gln-154 is a (R)-pantoate binding site. ATP is bound by residues Val-177 and 185–188; that span reads LSSR.

It belongs to the pantothenate synthetase family. Homodimer.

Its subcellular location is the cytoplasm. The enzyme catalyses (R)-pantoate + beta-alanine + ATP = (R)-pantothenate + AMP + diphosphate + H(+). It functions in the pathway cofactor biosynthesis; (R)-pantothenate biosynthesis; (R)-pantothenate from (R)-pantoate and beta-alanine: step 1/1. In terms of biological role, catalyzes the condensation of pantoate with beta-alanine in an ATP-dependent reaction via a pantoyl-adenylate intermediate. This is Pantothenate synthetase from Psychrobacter sp. (strain PRwf-1).